The primary structure comprises 309 residues: HPr kinase/phosphorylase (309 aa).

Residues histidine 138 and lysine 159 contribute to the active site. ATP is bound at residue 153–160 (GQSGVGKS). Serine 160 serves as a coordination point for Mg(2+). Aspartate 177 serves as the catalytic Proton acceptor; for phosphorylation activity. Proton donor; for dephosphorylation activity. Residues 201–210 (LEIRGLGIIN) form an important for the catalytic mechanism of both phosphorylation and dephosphorylation region. Glutamate 202 lines the Mg(2+) pocket. Arginine 243 is a catalytic residue. An important for the catalytic mechanism of dephosphorylation region spans residues 264-269 (PVRPGR).

It belongs to the HPrK/P family. In terms of assembly, homohexamer. Requires Mg(2+) as cofactor.

The catalysed reaction is [HPr protein]-L-serine + ATP = [HPr protein]-O-phospho-L-serine + ADP + H(+). It carries out the reaction [HPr protein]-O-phospho-L-serine + phosphate + H(+) = [HPr protein]-L-serine + diphosphate. Functionally, catalyzes the ATP- as well as the pyrophosphate-dependent phosphorylation of a specific serine residue in HPr, a phosphocarrier protein of the phosphoenolpyruvate-dependent sugar phosphotransferase system (PTS). HprK/P also catalyzes the pyrophosphate-producing, inorganic phosphate-dependent dephosphorylation (phosphorolysis) of seryl-phosphorylated HPr (P-Ser-HPr). The two antagonistic activities of HprK/P are regulated by several intracellular metabolites, which change their concentration in response to the absence or presence of rapidly metabolisable carbon sources (glucose, fructose, etc.) in the growth medium. Also phosphorylates/dephosphorylates the HPr-like catabolite repression protein crh on a specific serine residue. Therefore, by controlling the phosphorylation state of HPr and crh, HPrK/P is a sensor enzyme that plays a major role in the regulation of carbon metabolism and sugar transport: it mediates carbon catabolite repression (CCR), and regulates PTS-catalyzed carbohydrate uptake and inducer exclusion. In Bacillus cytotoxicus (strain DSM 22905 / CIP 110041 / 391-98 / NVH 391-98), this protein is HPr kinase/phosphorylase.